Here is a 499-residue protein sequence, read N- to C-terminus: Glycerol kinase (499 aa).

Threonine 13 contributes to the ADP binding site. Residues threonine 13, threonine 14, and serine 15 each coordinate ATP. Threonine 13 is a sn-glycerol 3-phosphate binding site. Position 17 (arginine 17) interacts with ADP. Arginine 83, glutamate 84, tyrosine 135, and aspartate 245 together coordinate sn-glycerol 3-phosphate. Glycerol contacts are provided by arginine 83, glutamate 84, tyrosine 135, aspartate 245, and glutamine 246. Threonine 267 and glycine 310 together coordinate ADP. ATP is bound by residues threonine 267, glycine 310, glutamine 314, and alanine 411. ADP-binding residues include alanine 411 and asparagine 415.

The protein belongs to the FGGY kinase family.

The catalysed reaction is glycerol + ATP = sn-glycerol 3-phosphate + ADP + H(+). The protein operates within polyol metabolism; glycerol degradation via glycerol kinase pathway; sn-glycerol 3-phosphate from glycerol: step 1/1. Its activity is regulated as follows. Inhibited by fructose 1,6-bisphosphate (FBP). Key enzyme in the regulation of glycerol uptake and metabolism. Catalyzes the phosphorylation of glycerol to yield sn-glycerol 3-phosphate. The sequence is that of Glycerol kinase from Xylella fastidiosa (strain M23).